The chain runs to 90 residues: Small ribosomal subunit protein bS18 (90 aa).

This sequence belongs to the bacterial ribosomal protein bS18 family. Part of the 30S ribosomal subunit. Forms a tight heterodimer with protein bS6.

Binds as a heterodimer with protein bS6 to the central domain of the 16S rRNA, where it helps stabilize the platform of the 30S subunit. In Porphyromonas gingivalis (strain ATCC 33277 / DSM 20709 / CIP 103683 / JCM 12257 / NCTC 11834 / 2561), this protein is Small ribosomal subunit protein bS18.